Reading from the N-terminus, the 492-residue chain is Ketol-acid reductoisomerase (NADP(+)) (492 aa).

Residues 17-208 (LGQCRLMKKN…GSNKAGVLES (192 aa)) enclose the KARI N-terminal Rossmann domain. NADP(+) is bound by residues 45 to 48 (CGSQ), R68, S76, and S78. The active site involves H132. Residue G158 coordinates NADP(+). 2 KARI C-terminal knotted domains span residues 209-344 (SFVA…KAPV) and 345-487 (YCET…MKDM). 4 residues coordinate Mg(2+): D217, E221, E389, and E393. Position 414 (S414) interacts with substrate.

The protein belongs to the ketol-acid reductoisomerase family. Mg(2+) serves as cofactor.

It carries out the reaction (2R)-2,3-dihydroxy-3-methylbutanoate + NADP(+) = (2S)-2-acetolactate + NADPH + H(+). The catalysed reaction is (2R,3R)-2,3-dihydroxy-3-methylpentanoate + NADP(+) = (S)-2-ethyl-2-hydroxy-3-oxobutanoate + NADPH + H(+). The protein operates within amino-acid biosynthesis; L-isoleucine biosynthesis; L-isoleucine from 2-oxobutanoate: step 2/4. It participates in amino-acid biosynthesis; L-valine biosynthesis; L-valine from pyruvate: step 2/4. Its function is as follows. Involved in the biosynthesis of branched-chain amino acids (BCAA). Catalyzes an alkyl-migration followed by a ketol-acid reduction of (S)-2-acetolactate (S2AL) to yield (R)-2,3-dihydroxy-isovalerate. In the isomerase reaction, S2AL is rearranged via a Mg-dependent methyl migration to produce 3-hydroxy-3-methyl-2-ketobutyrate (HMKB). In the reductase reaction, this 2-ketoacid undergoes a metal-dependent reduction by NADPH to yield (R)-2,3-dihydroxy-isovalerate. The chain is Ketol-acid reductoisomerase (NADP(+)) from Blochmanniella floridana.